We begin with the raw amino-acid sequence, 179 residues long: MNRLKEKYVKEVVPALMSKFNYKSIMQVPKIEKIVINMGVGDAVQNPKALDSAVEELTLIAGQRPVVTRAKKSIAGFRLRQGMPIGAKVTLRGERMYEFLDKLISVSLPRVRDFRGVSKKAFDGRGNYTLGIKEQLIFPEIDYDKVNKVRGMDIVIVTTANTDEEARELLALLGMPFQK.

As to quaternary structure, contacts the P site tRNA. Forms a bridge to the 30S subunit in the 70S ribosome. Part of the 50S ribosomal subunit. Part of the 5S rRNA/L5/L18 subcomplex; in this organism only 2 proteins, L5 and L18 have been shown to be part of the 5S rRNA subcomplex, unlike E.coli and T.thermophilus where L25 (TL5) is also found. Has been shown to bind 5S rRNA.

Functionally, this is one of the proteins that bind and probably mediate the attachment of the 5S RNA into the large ribosomal subunit, where it forms part of the central protuberance. In the 70S ribosome it contacts protein S13 of the 30S subunit (bridge B1b), connecting the 2 subunits; this bridge is implicated in subunit movement. Contacts the P site tRNA; the 5S rRNA and some of its associated proteins might help stabilize positioning of ribosome-bound tRNAs. The polypeptide is Large ribosomal subunit protein uL5 (rplE) (Geobacillus stearothermophilus (Bacillus stearothermophilus)).